Consider the following 400-residue polypeptide: MIIKPKIRGFICTTTHPVGCEANVKEQIAYTKAQGPIKNAPKRVLVVGASSGYGLSSRIAAAFGGGAATIGVFFEKEGSEKKPGTAGFYNAAAFEKLAREEGLYAKSLNGDAFSNEAKQKTIDLIKEDLGQVDMVVYSLASPVRKLPETGELIRSALKPIGQTYTSTAVDTNKDIIIEASVEPATEQEIQDTVTVMGGEDWELWINALAEAGVLADGCKTVAYSYIGTELTWPIYWDGALGKAKMDLDRAASALNDKLSATGGSANVAVLKSVVTQASSAIPVMPLYIAMVFKKMREEGVHEGCMEQIYRMFSQRLYKEDGSAAEVDEKNRLRLDDWELRDDIQEHCRNLWPQITTENLKELTDYVEYKEEFLKLFGFGIDGVDYEADVNPDVATDFIAI.

Residues 48 to 53 (GASSGY), 74 to 75 (FE), 111 to 112 (DA), and 139 to 140 (LA) each bind NAD(+). Tyr225 is a substrate binding site. The active-site Proton donor is Tyr235. Residues Lys244 and 273–275 (VVT) each bind NAD(+).

Belongs to the TER reductase family. In terms of assembly, monomer.

The catalysed reaction is a 2,3-saturated acyl-[ACP] + NAD(+) = a (2E)-enoyl-[ACP] + NADH + H(+). Its pathway is lipid metabolism; fatty acid biosynthesis. In terms of biological role, involved in the final reduction of the elongation cycle of fatty acid synthesis (FAS II). Catalyzes the reduction of a carbon-carbon double bond in an enoyl moiety that is covalently linked to an acyl carrier protein (ACP). The protein is Enoyl-[acyl-carrier-protein] reductase [NADH] 1 of Vibrio vulnificus (strain CMCP6).